The chain runs to 210 residues: Calcium-activated potassium channel subunit beta-4 (210 aa).

Residues 1–19 (MAKLRVSYEYTEAEDKSIR) are Cytoplasmic-facing. Residues 20–40 (LGLFLIVSGILSLFIFGFCWL) form a helical membrane-spanning segment. Topologically, residues 41–167 (SPALQDLQAT…DVLLQRTHDE (127 aa)) are extracellular. Residues asparagine 53 and asparagine 90 are each glycosylated (N-linked (GlcNAc...) asparagine). A helical membrane pass occupies residues 168-188 (IVLLHCFLWPVVAFVVGVLIV). Residues 189–210 (VLTICAKSLAVKAEAMKKRKFS) lie on the Cytoplasmic side of the membrane.

The protein belongs to the KCNMB (TC 8.A.14.1) family. KCNMB4 subfamily. As to quaternary structure, interacts with KCNMA1 tetramer. There are probably 4 molecules of KCMNB4 per KCNMA1 tetramer. Interacts with FMR1 (via N-terminus). In terms of processing, phosphorylated. Phosphorylation modulates its effect on KCNMA1 activation kinetics. Post-translationally, N-glycosylated. A highly glycosylated form is promoted by KCNMA1. Glycosylation, which is not required for the interaction with KCNMA1 and subcellular location, increases protection against charybdotoxin.

The protein resides in the membrane. Its function is as follows. Regulatory subunit of the calcium activated potassium KCNMA1 (maxiK) channel. Modulates the calcium sensitivity and gating kinetics of KCNMA1, thereby contributing to KCNMA1 channel diversity. Decreases the gating kinetics and calcium sensitivity of the KCNMA1 channel, but with fast deactivation kinetics. May decrease KCNMA1 channel openings at low calcium concentrations but increases channel openings at high calcium concentrations. Makes KCNMA1 channel resistant to 100 nM charybdotoxin (CTX) toxin concentrations. The sequence is that of Calcium-activated potassium channel subunit beta-4 (Kcnmb4) from Rattus norvegicus (Rat).